We begin with the raw amino-acid sequence, 151 residues long: Protein INO4 (151 aa).

Residues 45-97 enclose the bHLH domain; sequence QIRINHVSSEKKRRELERAIFDELVAVVPDLQPQESRSELIIYLKSLSYLSWL. The disordered stretch occupies residues 112–137; the sequence is HEAKTGSSSSSDPVQEQNGNIRDLVP. Residues 116–131 show a composition bias toward polar residues; the sequence is TGSSSSSDPVQEQNGN.

As to quaternary structure, efficient DNA binding requires dimerization with another bHLH protein.

The protein resides in the nucleus. Functionally, transcriptional activator of phospholipid synthetic genes (such as INO1, CHO1/PSS, CHO2/PEM1, OPI3/PEM2, etc.). This is Protein INO4 (INO4) from Saccharomyces cerevisiae (strain ATCC 204508 / S288c) (Baker's yeast).